The following is a 333-amino-acid chain: Acetyl-coenzyme A carboxylase carboxyl transferase subunit alpha (333 aa).

The region spanning 48–308 (ALEVKVETLR…KEMLIEELRI (261 aa)) is the CoA carboxyltransferase C-terminal domain.

The protein belongs to the AccA family. In terms of assembly, acetyl-CoA carboxylase is a heterohexamer composed of biotin carboxyl carrier protein (AccB), biotin carboxylase (AccC) and two subunits each of ACCase subunit alpha (AccA) and ACCase subunit beta (AccD).

The protein localises to the cytoplasm. The enzyme catalyses N(6)-carboxybiotinyl-L-lysyl-[protein] + acetyl-CoA = N(6)-biotinyl-L-lysyl-[protein] + malonyl-CoA. It functions in the pathway lipid metabolism; malonyl-CoA biosynthesis; malonyl-CoA from acetyl-CoA: step 1/1. Functionally, component of the acetyl coenzyme A carboxylase (ACC) complex. First, biotin carboxylase catalyzes the carboxylation of biotin on its carrier protein (BCCP) and then the CO(2) group is transferred by the carboxyltransferase to acetyl-CoA to form malonyl-CoA. The protein is Acetyl-coenzyme A carboxylase carboxyl transferase subunit alpha of Chlorobium phaeobacteroides (strain DSM 266 / SMG 266 / 2430).